We begin with the raw amino-acid sequence, 1409 residues long: DNA-directed RNA polymerase subunit beta' (1409 aa).

Positions 70, 72, 85, and 88 each coordinate Zn(2+). Mg(2+) contacts are provided by D461, D463, and D465. The Zn(2+) site is built by C820, C894, C901, and C904.

It belongs to the RNA polymerase beta' chain family. As to quaternary structure, the RNAP catalytic core consists of 2 alpha, 1 beta, 1 beta' and 1 omega subunit. When a sigma factor is associated with the core the holoenzyme is formed, which can initiate transcription. Mg(2+) serves as cofactor. The cofactor is Zn(2+).

The catalysed reaction is RNA(n) + a ribonucleoside 5'-triphosphate = RNA(n+1) + diphosphate. Functionally, DNA-dependent RNA polymerase catalyzes the transcription of DNA into RNA using the four ribonucleoside triphosphates as substrates. The polypeptide is DNA-directed RNA polymerase subunit beta' (Ralstonia nicotianae (strain ATCC BAA-1114 / GMI1000) (Ralstonia solanacearum)).